We begin with the raw amino-acid sequence, 180 residues long: uncharacterized protein (180 aa).

The region spanning 1 to 180 (MVEFEIVKGD…KDYERALRAV (180 aa)) is the Macro domain.

This is an uncharacterized protein from Thermococcus kodakarensis (strain ATCC BAA-918 / JCM 12380 / KOD1) (Pyrococcus kodakaraensis (strain KOD1)).